Consider the following 124-residue polypeptide: Fluoride-specific ion channel FluC (124 aa).

4 helical membrane-spanning segments follow: residues 4 to 24 (LIFVALGGSIGAVFRYLISIF), 35 to 55 (FGTLMVNVIGSFLMGVIYALG), 62 to 82 (PEIKALVGVGLLGALTTFSTF), and 102 to 122 (IALNLCLCLFMVYLGQQLVFS). Gly-74 and Thr-77 together coordinate Na(+).

It belongs to the fluoride channel Fluc/FEX (TC 1.A.43) family.

The protein resides in the cell inner membrane. It catalyses the reaction fluoride(in) = fluoride(out). Its activity is regulated as follows. Na(+) is not transported, but it plays an essential structural role and its presence is essential for fluoride channel function. Fluoride-specific ion channel. Important for reducing fluoride concentration in the cell, thus reducing its toxicity. This is Fluoride-specific ion channel FluC from Shewanella loihica (strain ATCC BAA-1088 / PV-4).